The sequence spans 212 residues: Thymidylate kinase (212 aa).

Ala-2 bears the N-acetylalanine mark. ATP contacts are provided by residues 16-21 and Arg-97; that span reads RAGKST. The tract at residues 133-157 is LID; the sequence is LQLQLADAAKRGAFGHERYENGAFQ. Lys-169 is subject to N6-acetyllysine. Residues Lys-182 and Arg-192 each coordinate ATP.

This sequence belongs to the thymidylate kinase family. Homodimer. It depends on Mg(2+) as a cofactor.

The enzyme catalyses dTMP + ATP = dTDP + ADP. Its pathway is pyrimidine metabolism; dTTP biosynthesis. Catalyzes the phosphorylation of thymidine monophosphate (dTMP) to thymidine diphosphate (dTDP), the immediate precursor for the DNA building block dTTP, with ATP as the preferred phosphoryl donor in the presence of Mg(2+). The chain is Thymidylate kinase (DTYMK) from Homo sapiens (Human).